A 122-amino-acid polypeptide reads, in one-letter code: Large ribosomal subunit protein uL18 (122 aa).

This sequence belongs to the universal ribosomal protein uL18 family. Part of the 50S ribosomal subunit; part of the 5S rRNA/L5/L18/L25 subcomplex. Contacts the 5S and 23S rRNAs.

This is one of the proteins that bind and probably mediate the attachment of the 5S RNA into the large ribosomal subunit, where it forms part of the central protuberance. In Syntrophotalea carbinolica (strain DSM 2380 / NBRC 103641 / GraBd1) (Pelobacter carbinolicus), this protein is Large ribosomal subunit protein uL18.